A 402-amino-acid polypeptide reads, in one-letter code: NADH-quinone oxidoreductase subunit D (402 aa).

Belongs to the complex I 49 kDa subunit family. As to quaternary structure, NDH-1 is composed of 14 different subunits. Subunits NuoB, C, D, E, F, and G constitute the peripheral sector of the complex.

The protein resides in the cell inner membrane. The catalysed reaction is a quinone + NADH + 5 H(+)(in) = a quinol + NAD(+) + 4 H(+)(out). Functionally, NDH-1 shuttles electrons from NADH, via FMN and iron-sulfur (Fe-S) centers, to quinones in the respiratory chain. The immediate electron acceptor for the enzyme in this species is believed to be ubiquinone. Couples the redox reaction to proton translocation (for every two electrons transferred, four hydrogen ions are translocated across the cytoplasmic membrane), and thus conserves the redox energy in a proton gradient. This Protochlamydia amoebophila (strain UWE25) protein is NADH-quinone oxidoreductase subunit D.